Consider the following 248-residue polypeptide: E3 SUMO-protein ligase NSE2 (248 aa).

Met1 is subject to N-acetylmethionine. Glycyl lysine isopeptide (Lys-Gly) (interchain with G-Cter in SUMO2) cross-links involve residues Lys92 and Lys109. Ser118 carries the post-translational modification Phosphoserine. Residues Lys127 and Lys132 each participate in a glycyl lysine isopeptide (Lys-Gly) (interchain with G-Cter in SUMO2) cross-link. The SP-RING-type zinc-finger motif lies at 156 to 242 (VDEDMIVTQS…LRRAIESHKK (87 aa)). 4 residues coordinate Zn(2+): Cys187, His189, Cys212, and Cys217.

This sequence belongs to the NSE2 family. As to quaternary structure, component of the SMC5-SMC6 complex which consists at least of SMC5, SMC6, NSMCE2, NSMCE1, NSMCE4A or EID3 and NSMCE3. Post-translationally, sumoylated, possibly via autosumoylation.

It is found in the nucleus. The protein resides in the chromosome. It localises to the telomere. Its subcellular location is the PML body. The protein operates within protein modification; protein sumoylation. Functionally, E3 SUMO-protein ligase component of the SMC5-SMC6 complex, a complex involved in DNA double-strand break repair by homologous recombination. Is not be required for the stability of the complex. The complex may promote sister chromatid homologous recombination by recruiting the SMC1-SMC3 cohesin complex to double-strand breaks. Acts as an E3 ligase mediating SUMO attachment to various proteins such as SMC6L1 and TSNAX, the shelterin complex subunits TERF1, TERF2, TINF2 and TERF2IP, RAD51AP1, and maybe the cohesin components RAD21 and STAG2. Required for recruitment of telomeres to PML nuclear bodies. Required for sister chromatid cohesion during prometaphase and mitotic progression. The polypeptide is E3 SUMO-protein ligase NSE2 (NSMCE2) (Bos taurus (Bovine)).